The sequence spans 388 residues: Probable fatty acid desaturase DES1 (388 aa).

The segment at 1–33 is disordered; that stretch reads MATTPMTVVDHEAEEAVAKAREDDKSRQVDAFD. A compositionally biased stretch (basic and acidic residues) spans 9-30; it reads VDHEAEEAVAKAREDDKSRQVD. Transmembrane regions (helical) follow at residues 62–82 and 85–105; these read LWYVVRDVAAVVALGTAAAAM and WAVWPVYWAVQGTMFWAFFVL. Residues 107–111 carry the Histidine box-1 motif; sequence HDCGH. Residues 119–139 form a helical membrane-spanning segment; that stretch reads TLNSVVGHLLHSFILIPYHGW. A Histidine box-2 motif is present at residues 143-147; the sequence is HRTHH. 3 helical membrane-spanning segments follow: residues 177-194, 226-246, and 248-268; these read IRFTAPYPLLLFPLYLFY, WCIMLASLLAMSCAFGPLQVL, and MYGLPYLVFVMWLDLVTYLHH. Positions 310 to 314 match the Histidine box-3 motif; that stretch reads HVIHH.

This sequence belongs to the fatty acid desaturase type 1 family. As to expression, highly expressed in root hair cells. Barely detected in panicle, shoot apex, stems and leaves.

The protein localises to the membrane. The protein operates within lipid metabolism; polyunsaturated fatty acid biosynthesis. The chain is Probable fatty acid desaturase DES1 from Sorghum bicolor (Sorghum).